Here is a 228-residue protein sequence, read N- to C-terminus: Cytochrome b5 domain-containing protein 1 (228 aa).

The Cytochrome b5 heme-binding domain maps to 17–83 (RRYFTPSEVA…DPQTRDIRKH (67 aa)). Histidine 83 serves as a coordination point for heme.

It belongs to the cytochrome b5 family.

The protein localises to the cytoplasm. Its subcellular location is the cytoskeleton. The protein resides in the cilium axoneme. Functionally, radial spoke stalk protein that binds heme under oxidizing conditions. Required for the coordinated beating of multiple cilia maybe by functioning in a redox signaling pathway. The polypeptide is Cytochrome b5 domain-containing protein 1 (Cyb5d1) (Mus musculus (Mouse)).